The following is a 196-amino-acid chain: ATP-dependent Clp protease proteolytic subunit (196 aa).

The Nucleophile role is filled by serine 99. Histidine 124 is an active-site residue.

This sequence belongs to the peptidase S14 family. In terms of assembly, fourteen ClpP subunits assemble into 2 heptameric rings which stack back to back to give a disk-like structure with a central cavity, resembling the structure of eukaryotic proteasomes.

The protein localises to the cytoplasm. It carries out the reaction Hydrolysis of proteins to small peptides in the presence of ATP and magnesium. alpha-casein is the usual test substrate. In the absence of ATP, only oligopeptides shorter than five residues are hydrolyzed (such as succinyl-Leu-Tyr-|-NHMec, and Leu-Tyr-Leu-|-Tyr-Trp, in which cleavage of the -Tyr-|-Leu- and -Tyr-|-Trp bonds also occurs).. Cleaves peptides in various proteins in a process that requires ATP hydrolysis. Has a chymotrypsin-like activity. Plays a major role in the degradation of misfolded proteins. The protein is ATP-dependent Clp protease proteolytic subunit of Campylobacter lari (strain RM2100 / D67 / ATCC BAA-1060).